Here is a 422-residue protein sequence, read N- to C-terminus: Zona pellucida sperm-binding protein 3 (422 aa).

The N-terminal stretch at 1-22 (MGLSYQLLLCLLLCGGAKQCCS) is a signal peptide. Residue Q23 is modified to Pyrrolidone carboxylic acid. Residues 23–386 (QPLWLLPGGT…GWASSAQTSL (364 aa)) lie on the Extracellular side of the membrane. T32 and T34 each carry an O-linked (GalNAc...) threonine glycan. A ZP domain is found at 45 to 306 (ECLEAELVVT…KACSFNRSSK (262 aa)). 2 disulfides stabilise this stretch: C46–C139 and C78–C98. An N-linked (GlcNAc...) asparagine glycan is attached at N146. T155, T161, and T162 each carry an O-linked (GalNAc...) threonine glycan. Intrachain disulfides connect C216–C281 and C238–C299. N-linked (GlcNAc...) asparagine glycosylation is found at N271 and N302. A propeptide spans 350 to 422 (RRHVRDEADV…TPSHVVSLSQ (73 aa)) (removed in mature form). Residues 387 to 407 (ALGLGLAAVAFLTLAAIVLGV) traverse the membrane as a helical segment. Over 408–422 (TRSCHTPSHVVSLSQ) the chain is Cytoplasmic.

It belongs to the ZP domain family. ZPC subfamily. Polymers of ZP2 and ZP3 organized into long filaments cross-linked by ZP1 homodimers. Interacts with ZP1 and ZP2. Post-translationally, proteolytically cleaved before the transmembrane segment to yield the secreted ectodomain incorporated in the zona pellucida. In terms of processing, N-glycosylated. O-glycosylated; removal of O-linked glycans may play an important role in the post-fertilization block to polyspermy. As to expression, expressed in oocytes.

The protein resides in the zona pellucida. Its subcellular location is the cell membrane. Its function is as follows. Component of the zona pellucida, an extracellular matrix surrounding oocytes which mediates sperm binding, induction of the acrosome reaction and prevents post-fertilization polyspermy. The zona pellucida is composed of 3 to 4 glycoproteins, ZP1, ZP2, ZP3, and ZP4. ZP3 is essential for sperm binding and zona matrix formation. The protein is Zona pellucida sperm-binding protein 3 (ZP3) of Mesocricetus auratus (Golden hamster).